The chain runs to 451 residues: NAC domain containing protein 52 (451 aa).

Positions 1 to 21 (MGRESVAVVTAPPSATAPGTA) are disordered. Residues 27–178 (LAPGFRFHPT…AYVLCRVFHK (152 aa)) enclose the NAC domain. The DNA-binding element occupies 126-184 (LGMKKTLVFHSGRAPDGLRTNWVMHEYRLVEYETEKNGNLVQDAYVLCRVFHKNNIGPP). 2 disordered regions span residues 255-337 (DQQN…TTTT) and 370-400 (KKEK…KVND). Positions 256–270 (QQNHHENDLKPEEHN) are enriched in basic and acidic residues. Residues 272–292 (NNNYDENEETLKREQMEEEER) adopt a coiled-coil conformation. The segment covering 318-337 (ESNNNSSRNTQDHCSSTTTT) has biased composition (low complexity). A compositionally biased stretch (basic and acidic residues) spans 370-384 (KKEKPQQPLRPHKEP). Positions 398–446 (VNDLQKEIHQMSVERETFKLEMMSAEAMISILQSRIDALRQENEELKKN) form a coiled coil.

In terms of assembly, interacts with JMJ14 and NAC050. In terms of tissue distribution, mostly expressed in floral organs, and, at low levels, in other organs.

The protein resides in the nucleus. Transcriptional repressor that binds to the motif 5'-(C/T)A(C/A)G-3' in the promoter of target genes. Also binds to the 5'-CTTGNNNNNCAAG-3' consensus sequence in chromatin. Can bind to the mitochondrial dysfunction motif (MDM) present in the upstream regions of mitochondrial dysfunction stimulon (MDS) genes involved in mitochondrial retrograde regulation (MRR). Together with NAC050 and JMJ14, regulates gene expression and flowering time by associating with the histone demethylase JMJ14, probably by the promotion of RNA-mediated gene silencing. Regulates siRNA-dependent post-transcriptional gene silencing (PTGS) through SGS3 expression modulation. Required during pollen development. In Arabidopsis thaliana (Mouse-ear cress), this protein is NAC domain containing protein 52.